A 552-amino-acid polypeptide reads, in one-letter code: Iduronate 2-sulfatase (552 aa).

The N-terminal stretch at 1–29 is a signal peptide; the sequence is MSPPPPPPIWRQLSFSLLLGSFCIALESA. Positions 30–35 are excised as a propeptide; that stretch reads AQGNSA. Ca(2+) is bound by residues Asp47, Asp48, and Cys86. Cys86 functions as the Nucleophile in the catalytic mechanism. The residue at position 86 (Cys86) is a 3-oxoalanine (Cys). N-linked (GlcNAc...) asparagine glycosylation is present at Asn117. His140 is an active-site residue. An N-linked (GlcNAc...) asparagine glycan is attached at Asn146. Cys173 and Cys186 are disulfide-bonded. N-linked (GlcNAc...) asparagine glycans are attached at residues Asn248 and Asn282. Asp336 and His337 together coordinate Ca(2+). Cys424 and Cys434 are oxidised to a cystine. 2 N-linked (GlcNAc...) asparagine glycosylation sites follow: Asn515 and Asn539.

It belongs to the sulfatase family. As to quaternary structure, monomer. The 58-kDa mature form is composed of two chains resulting from proteolitic processing, the 42-kDa chain and the 14-kDa chain that remain stably associated and form the 58-kDa intermediate form which is enzymatically active. Ca(2+) serves as cofactor. In terms of processing, synthesized as a 75-kDa precursor form in the endoplasmic reticulum (ER), and then processed by proteolytic cleavage through various intermediates to yield a 55-kDa mature form, with the release of an 18 kDa polypeptide. Post-translationally, the conversion to 3-oxoalanine (also known as C-formylglycine, FGly), of a serine or cysteine residue in prokaryotes and of a cysteine residue in eukaryotes, is critical for catalytic activity. In terms of tissue distribution, found to be expressed in alpha and beta pancreatic cells.

The protein localises to the lysosome. The enzyme catalyses Hydrolysis of the 2-sulfate groups of the L-iduronate 2-sulfate units of dermatan sulfate, heparan sulfate and heparin.. Lysosomal enzyme involved in the degradation pathway of dermatan sulfate and heparan sulfate. This is Iduronate 2-sulfatase (Ids) from Mus musculus (Mouse).